We begin with the raw amino-acid sequence, 257 residues long: Tryptophan synthase alpha chain (257 aa).

Catalysis depends on proton acceptor residues Glu-44 and Asp-55.

Belongs to the TrpA family. In terms of assembly, tetramer of two alpha and two beta chains.

The catalysed reaction is (1S,2R)-1-C-(indol-3-yl)glycerol 3-phosphate + L-serine = D-glyceraldehyde 3-phosphate + L-tryptophan + H2O. The protein operates within amino-acid biosynthesis; L-tryptophan biosynthesis; L-tryptophan from chorismate: step 5/5. Functionally, the alpha subunit is responsible for the aldol cleavage of indoleglycerol phosphate to indole and glyceraldehyde 3-phosphate. In Chlamydia felis (strain Fe/C-56) (Chlamydophila felis), this protein is Tryptophan synthase alpha chain.